A 189-amino-acid chain; its full sequence is TATA-box-binding protein 1 (189 aa).

Tandem repeats lie at residues 10-86 (IENV…FDKL) and 101-179 (VQNI…ISRL).

It belongs to the TBP family.

In terms of biological role, general factor that plays a role in the activation of archaeal genes transcribed by RNA polymerase. Binds specifically to the TATA box promoter element which lies close to the position of transcription initiation. The polypeptide is TATA-box-binding protein 1 (tbp1) (Haloferax volcanii (strain ATCC 29605 / DSM 3757 / JCM 8879 / NBRC 14742 / NCIMB 2012 / VKM B-1768 / DS2) (Halobacterium volcanii)).